We begin with the raw amino-acid sequence, 151 residues long: Ubiquitin-like protein 4A-B (151 aa).

The 76-residue stretch at 1 to 76 folds into the Ubiquitin-like domain; that stretch reads MILTIKPLKG…LNLVVRPAGE (76 aa).

Component of the BAT3 complex.

The protein resides in the cytoplasm. Its subcellular location is the cytosol. In terms of biological role, component of the BAT3 complex, a multiprotein complex involved in the post-translational delivery of tail-anchored (TA) membrane proteins to the endoplasmic reticulum membrane. TA membrane proteins, also named type II transmembrane proteins, contain a single C-terminal transmembrane region. The polypeptide is Ubiquitin-like protein 4A-B (ubl4ab) (Oncorhynchus mykiss (Rainbow trout)).